The chain runs to 350 residues: Hydroxymethylglutaryl-CoA synthase (350 aa).

The Proton donor/acceptor role is filled by glutamate 83. The active-site Acyl-thioester intermediate is cysteine 115. Residues cysteine 115 and threonine 156 each contribute to the (3S)-3-hydroxy-3-methylglutaryl-CoA site. Arginine 204 is a CoA binding site. Threonine 206 and histidine 239 together coordinate (3S)-3-hydroxy-3-methylglutaryl-CoA. Histidine 239 (proton donor/acceptor) is an active-site residue. Lysine 244 is a CoA binding site. (3S)-3-hydroxy-3-methylglutaryl-CoA-binding residues include asparagine 271 and serine 301.

It belongs to the thiolase-like superfamily. Archaeal HMG-CoA synthase family. As to quaternary structure, interacts with acetoacetyl-CoA thiolase that catalyzes the precedent step in the pathway and with a DUF35 protein. The acetoacetyl-CoA thiolase/HMG-CoA synthase complex channels the intermediate via a fused CoA-binding site, which allows for efficient coupling of the endergonic thiolase reaction with the exergonic HMGCS reaction.

The catalysed reaction is acetoacetyl-CoA + acetyl-CoA + H2O = (3S)-3-hydroxy-3-methylglutaryl-CoA + CoA + H(+). It functions in the pathway metabolic intermediate biosynthesis; (R)-mevalonate biosynthesis; (R)-mevalonate from acetyl-CoA: step 2/3. Catalyzes the condensation of acetyl-CoA with acetoacetyl-CoA to form 3-hydroxy-3-methylglutaryl-CoA (HMG-CoA). Functions in the mevalonate (MVA) pathway leading to isopentenyl diphosphate (IPP), a key precursor for the biosynthesis of isoprenoid compounds that are building blocks of archaeal membrane lipids. This chain is Hydroxymethylglutaryl-CoA synthase, found in Pyrococcus horikoshii (strain ATCC 700860 / DSM 12428 / JCM 9974 / NBRC 100139 / OT-3).